Consider the following 638-residue polypeptide: 1-deoxy-D-xylulose-5-phosphate synthase (638 aa).

Residues His75 and 116–118 (AHS) contribute to the thiamine diphosphate site. Residue Asp147 coordinates Mg(2+). Residues 148-149 (GA), Asn177, Tyr288, and Glu370 each bind thiamine diphosphate. Residue Asn177 participates in Mg(2+) binding.

It belongs to the transketolase family. DXPS subfamily. As to quaternary structure, homodimer. Mg(2+) serves as cofactor. The cofactor is thiamine diphosphate.

It catalyses the reaction D-glyceraldehyde 3-phosphate + pyruvate + H(+) = 1-deoxy-D-xylulose 5-phosphate + CO2. It functions in the pathway metabolic intermediate biosynthesis; 1-deoxy-D-xylulose 5-phosphate biosynthesis; 1-deoxy-D-xylulose 5-phosphate from D-glyceraldehyde 3-phosphate and pyruvate: step 1/1. Its function is as follows. Catalyzes the acyloin condensation reaction between C atoms 2 and 3 of pyruvate and glyceraldehyde 3-phosphate to yield 1-deoxy-D-xylulose-5-phosphate (DXP). The protein is 1-deoxy-D-xylulose-5-phosphate synthase of Cupriavidus taiwanensis (strain DSM 17343 / BCRC 17206 / CCUG 44338 / CIP 107171 / LMG 19424 / R1) (Ralstonia taiwanensis (strain LMG 19424)).